Reading from the N-terminus, the 540-residue chain is Decreased expression in renal and prostate cancer protein (540 aa).

The span at 1-12 shows a compositional bias: basic and acidic residues; the sequence is MKEPRIFPRERP. 2 disordered regions span residues 1–264 and 304–389; these read MKEP…DARA and SQAS…AFSQ. Low complexity-rich tracts occupy residues 113–125 and 180–192; these read PRPG…SPGS and GPSL…LTPG. A compositionally biased stretch (polar residues) spans 304 to 316; the sequence is SQASGNMGTSPSS. Residue Ser-313 is modified to Phosphoserine. Residues 321–330 are compositionally biased toward low complexity; that stretch reads PGPIGPNSGP. At Arg-375 the chain carries Asymmetric dimethylarginine. The residue at position 403 (Arg-403) is an Omega-N-methylarginine. Ser-439 carries the phosphoserine modification. Residues 516–540 form a disordered region; that stretch reads GTNPAAFPRPGGPMAAMYPNGMLPP.

Belongs to the DERPC family.

It is found in the nucleus. Functionally, potential tumor suppressor. The polypeptide is Decreased expression in renal and prostate cancer protein (Bos taurus (Bovine)).